The chain runs to 86 residues: Class II hydrophobin 2 (86 aa).

The N-terminal stretch at 1–15 is a signal peptide; sequence MQFFAVALFATSALA. Intrachain disulfides connect cysteine 18–cysteine 67, cysteine 28–cysteine 58, cysteine 29–cysteine 41, and cysteine 68–cysteine 79.

It belongs to the cerato-ulmin hydrophobin family. As to quaternary structure, homodimer. Homodimers further self-assemble to form highly ordered films at water-air interfaces through intermolecular interactions.

The protein localises to the secreted. It is found in the spore wall. It localises to the cell wall. Its function is as follows. Aerial growth, conidiation, and dispersal of filamentous fungi in the environment rely upon a capability of their secreting small amphipathic proteins called hydrophobins (HPBs) with low sequence identity. Class I can self-assemble into an outermost layer of rodlet bundles on aerial cell surfaces, conferring cellular hydrophobicity that supports fungal growth, development and dispersal; whereas Class II form highly ordered films at water-air interfaces through intermolecular interactions but contribute nothing to the rodlet structure. Hbf2 is a class II hydrophobin that is involved in sporuration. The sequence is that of Class II hydrophobin 2 from Hypocrea jecorina (Trichoderma reesei).